The sequence spans 126 residues: Fluoride-specific ion channel FluC (126 aa).

Helical transmembrane passes span 5-25 (IAVI…FALW), 34-54 (WGTL…LAVF), 67-87 (LVIT…GEVV), and 95-115 (FGLA…LTWA). 2 residues coordinate Na(+): Gly74 and Thr77.

This sequence belongs to the fluoride channel Fluc/FEX (TC 1.A.43) family.

Its subcellular location is the cell inner membrane. The enzyme catalyses fluoride(in) = fluoride(out). Its activity is regulated as follows. Na(+) is not transported, but it plays an essential structural role and its presence is essential for fluoride channel function. Its function is as follows. Fluoride-specific ion channel. Important for reducing fluoride concentration in the cell, thus reducing its toxicity. The polypeptide is Fluoride-specific ion channel FluC (Paracidovorax citrulli (strain AAC00-1) (Acidovorax citrulli)).